The primary structure comprises 396 residues: Elongation factor Tu (396 aa).

Residues 10-206 (KPHVNVGTIG…ALDTYIPLPE (197 aa)) form the tr-type G domain. Positions 19 to 26 (GHVDHGKT) are G1. 19-26 (GHVDHGKT) contributes to the GTP binding site. Thr-26 provides a ligand contact to Mg(2+). The interval 60 to 64 (GITIN) is G2. A G3 region spans residues 81-84 (DCPG). GTP contacts are provided by residues 81–85 (DCPGH) and 136–139 (NKCD). Residues 136–139 (NKCD) form a G4 region. Residues 174 to 176 (SAK) are G5.

This sequence belongs to the TRAFAC class translation factor GTPase superfamily. Classic translation factor GTPase family. EF-Tu/EF-1A subfamily. As to quaternary structure, monomer.

It is found in the cytoplasm. The catalysed reaction is GTP + H2O = GDP + phosphate + H(+). In terms of biological role, GTP hydrolase that promotes the GTP-dependent binding of aminoacyl-tRNA to the A-site of ribosomes during protein biosynthesis. The sequence is that of Elongation factor Tu from Polaromonas sp. (strain JS666 / ATCC BAA-500).